Reading from the N-terminus, the 707-residue chain is Mitochondrial disaggregase (707 aa).

Residues 1–36 constitute a mitochondrion transit peptide; the sequence is MLGSLVLRRKALAPRLLLRLLRSPTLRGHGGASGRN. An autoinhibitory region spans residues 92-126; that stretch reads PGPEETLPGQDSWNGVPSRAGLGMCALAAALVVHC. ANK repeat units follow at residues 133-162, 166-195, 265-295, and 298-327; these read NKDA…DVNA, LGWT…DPNL, KGCT…PLQR, and MGHT…EKQR. His-346, Ile-348, Ser-383, Gly-384, Ile-385, Gly-386, Lys-387, Thr-388, Glu-455, and Asn-496 together coordinate ATP. The segment at 507–535 is regulatory; slows ATPase and disaggregase activities; it reads LQLRQEALEMSRNRIAENLGDVQISDKIT. Arg-561 contacts ATP. Position 589 is an N6-acetyllysine (Lys-589). Arg-620 contacts ATP.

The protein belongs to the ClpA/ClpB family. As to quaternary structure, homododecamer when substrate-bound; the homododecamer consists of 2 homohexamers stacked head-to-head via ANK repeat-mediated interactions. The active substrate-bound form is likely to exist in a dynamic equilibrium between homohexamers and homododecamers. Homotetradecamer in the unbound state which is remodeled upon substrate binding into the homododecamer. Interacts with PHB and PHB2. Interacts with MAVS; the interaction is enhanced by Sendai virus infection. Proteolytically cleaved by protease PARL. ATP-dependent protein disaggregase activity is stimulated by PARL-mediated cleavage of the N-terminal autoinhibitory peptide. In terms of tissue distribution, widely expressed (at protein level). Expressed in fetal, as well as in adult tissues, with highest levels in adult brain, including thalamus, hippocampus, occipital cortex and parietal cortex. Low expression in granulocytes.

Its subcellular location is the mitochondrion intermembrane space. It catalyses the reaction ATP + H2O = ADP + phosphate + H(+). With respect to regulation, disaggregase activity is inhibited by ADP. Its function is as follows. Functions as a regulatory ATPase and participates in secretion/protein trafficking process. Has ATP-dependent protein disaggregase activity and is required to maintain the solubility of key mitochondrial proteins. Involved in mitochondrial-mediated antiviral innate immunity, activates RIG-I-mediated signal transduction and production of IFNB1 and pro-inflammatory cytokine IL6. Plays a role in granulocyte differentiation. The protein is Mitochondrial disaggregase of Homo sapiens (Human).